Here is a 281-residue protein sequence, read N- to C-terminus: Oxidoreductase-like protein SRL4 (281 aa).

5 residues coordinate NADP(+): L39, T60, K67, K152, and K197. K197 functions as the Lowers pKa of active site Tyr in the catalytic mechanism.

Belongs to the short-chain dehydrogenases/reductases (SDR) family.

In terms of biological role, may be involved in the regulation of dNTP production. Induces the SOS system when expressed in E.coli, therefore, it may play a role in DNA metabolism and/or in genome stability. The sequence is that of Oxidoreductase-like protein SRL4 (SRL4) from Saccharomyces cerevisiae (strain ATCC 204508 / S288c) (Baker's yeast).